Reading from the N-terminus, the 531-residue chain is Peptide chain release factor 3 (531 aa).

One can recognise a tr-type G domain in the interval 11-280 (GRRRTFAIIS…AFIRFASRPG (270 aa)). GTP is bound by residues 20–27 (SHPDAGKT), 88–92 (DTPGH), and 142–145 (NKLD).

The protein belongs to the TRAFAC class translation factor GTPase superfamily. Classic translation factor GTPase family. PrfC subfamily.

The protein localises to the cytoplasm. Its function is as follows. Increases the formation of ribosomal termination complexes and stimulates activities of RF-1 and RF-2. It binds guanine nucleotides and has strong preference for UGA stop codons. It may interact directly with the ribosome. The stimulation of RF-1 and RF-2 is significantly reduced by GTP and GDP, but not by GMP. In Gloeobacter violaceus (strain ATCC 29082 / PCC 7421), this protein is Peptide chain release factor 3.